We begin with the raw amino-acid sequence, 139 residues long: uncharacterized protein (139 aa).

The protein localises to the mitochondrion. This is an uncharacterized protein from Marchantia polymorpha (Common liverwort).